Reading from the N-terminus, the 186-residue chain is Heat shock protein 23 (186 aa).

The sHSP domain maps to 53–161 (VGASSGSSGA…KGNERIVQIQ (109 aa)). Residues 163–186 (VGPAHLNVKENPKEAVEQDNGNDK) form a disordered region. Over residues 169–186 (NVKENPKEAVEQDNGNDK) the composition is skewed to basic and acidic residues.

This sequence belongs to the small heat shock protein (HSP20) family.

The chain is Heat shock protein 23 (Hsp23) from Drosophila melanogaster (Fruit fly).